The following is an 88-amino-acid chain: Small ribosomal subunit protein bS16 (88 aa).

This sequence belongs to the bacterial ribosomal protein bS16 family.

This is Small ribosomal subunit protein bS16 from Leptospira borgpetersenii serovar Hardjo-bovis (strain L550).